Here is a 526-residue protein sequence, read N- to C-terminus: Peptide chain release factor 3 (526 aa).

One can recognise a tr-type G domain in the interval 11 to 277; sequence SKRRTFAIIS…SLIKWAPSPL (267 aa). GTP-binding positions include 20–27, 88–92, and 142–145; these read SHPDAGKT, DTPGH, and NKLD.

The protein belongs to the TRAFAC class translation factor GTPase superfamily. Classic translation factor GTPase family. PrfC subfamily.

It is found in the cytoplasm. Increases the formation of ribosomal termination complexes and stimulates activities of RF-1 and RF-2. It binds guanine nucleotides and has strong preference for UGA stop codons. It may interact directly with the ribosome. The stimulation of RF-1 and RF-2 is significantly reduced by GTP and GDP, but not by GMP. The polypeptide is Peptide chain release factor 3 (Buchnera aphidicola subsp. Acyrthosiphon pisum (strain 5A)).